Here is a 321-residue protein sequence, read N- to C-terminus: Putative ribose-phosphate pyrophosphokinase 2 (321 aa).

Residues 43-45 (DGE) and 102-103 (RQ) contribute to the ATP site. 2 residues coordinate Mg(2+): H136 and D176. D225 contributes to the D-ribose 5-phosphate binding site.

It belongs to the ribose-phosphate pyrophosphokinase family. Class I subfamily. Homohexamer. The cofactor is Mg(2+).

It localises to the cytoplasm. The catalysed reaction is D-ribose 5-phosphate + ATP = 5-phospho-alpha-D-ribose 1-diphosphate + AMP + H(+). It functions in the pathway metabolic intermediate biosynthesis; 5-phospho-alpha-D-ribose 1-diphosphate biosynthesis; 5-phospho-alpha-D-ribose 1-diphosphate from D-ribose 5-phosphate (route I): step 1/1. Involved in the biosynthesis of the central metabolite phospho-alpha-D-ribosyl-1-pyrophosphate (PRPP) via the transfer of pyrophosphoryl group from ATP to 1-hydroxyl of ribose-5-phosphate (Rib-5-P). The polypeptide is Putative ribose-phosphate pyrophosphokinase 2 (Lactiplantibacillus plantarum (strain ATCC BAA-793 / NCIMB 8826 / WCFS1) (Lactobacillus plantarum)).